A 583-amino-acid polypeptide reads, in one-letter code: Protein NRT1/ PTR FAMILY 5.1 (583 aa).

The helical transmembrane segment at 74–94 threads the bilayer; that stretch reads WSGAVWITPIAGAYIADSYIG. Threonine 98 carries the phosphothreonine modification. A run of 10 helical transmembrane segments spans residues 99 to 119, 134 to 154, 182 to 202, 210 to 230, 320 to 340, 361 to 381, 405 to 425, 446 to 466, 485 to 505, and 529 to 549; these read FTAS…AVTV, ASSL…IGAG, FFNW…LGLV, WGLG…VFYI, VLGL…WAQV, IPAA…VPMY, LGVG…VEVK, IFWL…NAIG, TFFT…VTMI, and YYYG…VWAA.

It belongs to the major facilitator superfamily. Proton-dependent oligopeptide transporter (POT/PTR) (TC 2.A.17) family. Expressed in flowers. Detected in stems, leaves and siliques.

Its subcellular location is the membrane. The chain is Protein NRT1/ PTR FAMILY 5.1 (NPF5.1) from Arabidopsis thaliana (Mouse-ear cress).